Consider the following 327-residue polypeptide: Undecaprenyl-phosphate 4-deoxy-4-formamido-L-arabinose transferase (327 aa).

Helical transmembrane passes span 236-256 (LSLVGSVIALSGFTLAVLLVV) and 270-290 (VFTLFAVLFMFIGAQFVGMGL).

The protein belongs to the glycosyltransferase 2 family.

The protein localises to the cell inner membrane. The catalysed reaction is UDP-4-deoxy-4-formamido-beta-L-arabinose + di-trans,octa-cis-undecaprenyl phosphate = 4-deoxy-4-formamido-alpha-L-arabinopyranosyl di-trans,octa-cis-undecaprenyl phosphate + UDP. Its pathway is glycolipid biosynthesis; 4-amino-4-deoxy-alpha-L-arabinose undecaprenyl phosphate biosynthesis; 4-amino-4-deoxy-alpha-L-arabinose undecaprenyl phosphate from UDP-4-deoxy-4-formamido-beta-L-arabinose and undecaprenyl phosphate: step 1/2. It functions in the pathway bacterial outer membrane biogenesis; lipopolysaccharide biosynthesis. Functionally, catalyzes the transfer of 4-deoxy-4-formamido-L-arabinose from UDP to undecaprenyl phosphate. The modified arabinose is attached to lipid A and is required for resistance to polymyxin and cationic antimicrobial peptides. This chain is Undecaprenyl-phosphate 4-deoxy-4-formamido-L-arabinose transferase, found in Yersinia enterocolitica serotype O:8 / biotype 1B (strain NCTC 13174 / 8081).